The following is a 37-amino-acid chain: Large ribosomal subunit protein bL36 (37 aa).

It belongs to the bacterial ribosomal protein bL36 family.

This is Large ribosomal subunit protein bL36 from Psychromonas ingrahamii (strain DSM 17664 / CCUG 51855 / 37).